Here is a 225-residue protein sequence, read N- to C-terminus: Insulin-induced gene 2 protein (225 aa).

Over 1 to 28 (MAEGETESPGPKKCGPYISSVTSQSVNL) the chain is Cytoplasmic. A helical membrane pass occupies residues 29–51 (MIRGVVLFFIGVFLALVLNLLQI). Residues 52–70 (QRNVTLFPPDVIASIFSSA) lie on the Lumenal side of the membrane. Residues 71–88 (WWVPPCCGTASAVIGLLY) traverse the membrane as a helical segment. The Cytoplasmic segment spans residues 89–103 (PCIDRHLGEPHKFKR). The helical transmembrane segment at 104-126 (EWSSVMRCVAVFVGINHASAKVD) threads the bilayer. Over 127-129 (FDN) the chain is Lumenal. The helical transmembrane segment at 130–148 (NIQLSLTLAALSIGLWWTF) threads the bilayer. The Cytoplasmic segment spans residues 149-153 (DRSRS). A Phosphoserine modification is found at S151. A helical membrane pass occupies residues 154 to 175 (GFGLGVGIAFLATLVTQLLVYN). Over 176–189 (GVYQYTSPDFLYVR) the chain is Lumenal. The chain crosses the membrane as a helical span at residues 190 to 207 (SWLPCIFFAGGITMGNIG). The Cytoplasmic segment spans residues 208 to 225 (RQLAMYECKVIAEKSHQE). Position 215 is a cysteine sulfenic acid (-SOH); alternate (C215). A Glycyl cysteine thioester (Cys-Gly) (interchain with G-Cter in ubiquitin); alternate cross-link involves residue C215. The KxHxx motif lies at 219-225 (AEKSHQE).

It belongs to the INSIG family. As to quaternary structure, interacts with SCAP; interaction is direct and only takes place in the presence of sterols; it prevents interaction between SCAP and the coat protein complex II (COPII). Associates with the SCAP-SREBP complex (composed of SCAP and SREBF1/SREBP1 or SREBF2/SREBP2); association is mediated via its interaction with SCAP and only takes place in the presence of sterols. Interacts with RNF139. Interacts with RNF145. In terms of processing, phosphorylation at Ser-151 by PCK1 reduces binding to oxysterol, disrupting the interaction between INSIG2 and SCAP, thereby promoting nuclear translocation of SREBP proteins (SREBF1/SREBP1 or SREBF2/SREBP2) and subsequent transcription of downstream lipogenesis-related genes. Polyubiquitinated by AMFR/gp78 at Cys-215 in some tissues such as adipose tissues, undifferentiated myoblasts and liver, leading to its degradation. In differentiated myotubes, Cys-215 oxidation prevents ubiquitination at the same site, resulting in protein stabilization. Post-translationally, oxidized at Cys-215 in differentiated myotubes, preventing ubiquitination at the same site, and resulting in protein stabilization.

It is found in the endoplasmic reticulum membrane. Its function is as follows. Oxysterol-binding protein that mediates feedback control of cholesterol synthesis by controlling both endoplasmic reticulum to Golgi transport of SCAP and degradation of HMGCR. Acts as a negative regulator of cholesterol biosynthesis by mediating the retention of the SCAP-SREBP complex in the endoplasmic reticulum, thereby blocking the processing of sterol regulatory element-binding proteins (SREBPs) SREBF1/SREBP1 and SREBF2/SREBP2. Binds oxysterol, including 22-hydroxycholesterol, 24-hydroxycholesterol, 25-hydroxycholesterol and 27-hydroxycholesterol, regulating interaction with SCAP and retention of the SCAP-SREBP complex in the endoplasmic reticulum. In presence of oxysterol, interacts with SCAP, retaining the SCAP-SREBP complex in the endoplasmic reticulum, thereby preventing SCAP from escorting SREBF1/SREBP1 and SREBF2/SREBP2 to the Golgi. Sterol deprivation or phosphorylation by PCK1 reduce oxysterol-binding, disrupting the interaction between INSIG2 and SCAP, thereby promoting Golgi transport of the SCAP-SREBP complex, followed by processing and nuclear translocation of SREBF1/SREBP1 and SREBF2/SREBP2. Also regulates cholesterol synthesis by regulating degradation of HMGCR: initiates the sterol-mediated ubiquitin-mediated endoplasmic reticulum-associated degradation (ERAD) of HMGCR via recruitment of the reductase to the ubiquitin ligase RNF139. The sequence is that of Insulin-induced gene 2 protein from Papio anubis (Olive baboon).